The sequence spans 590 residues: Fucose-1-phosphate guanylyltransferase (590 aa).

In terms of tissue distribution, expressed at highest levels in brain, moderately in testis, ovary and kidney, and weakly in liver, spleen, heart and lung.

It localises to the cytoplasm. It catalyses the reaction beta-L-fucose 1-phosphate + GTP + H(+) = GDP-beta-L-fucose + diphosphate. Its function is as follows. Catalyzes the formation of GDP-L-fucose from GTP and L-fucose-1-phosphate. Functions as a salvage pathway to reutilize L-fucose arising from the turnover of glycoproteins and glycolipids. The sequence is that of Fucose-1-phosphate guanylyltransferase from Mus musculus (Mouse).